Consider the following 315-residue polypeptide: Zinc finger CCCH domain-containing protein 23 (315 aa).

Positions 1-21 are disordered; the sequence is MMIGENKNRPHPTIHIPQWDQ. 2 consecutive C3H1-type zinc fingers follow at residues 131–157 and 165–189; these read YSGTACPEFRKGSCRRGDSCEFSHGVF and RYRTQPCKDGTSCRRRICFFAHTTE.

The polypeptide is Zinc finger CCCH domain-containing protein 23 (Arabidopsis thaliana (Mouse-ear cress)).